Consider the following 802-residue polypeptide: Leucine--tRNA ligase (802 aa).

The short motif at 41–52 is the 'HIGH' region element; sequence PYPSGQGLHVGH. The short motif at 580–584 is the 'KMSKS' region element; the sequence is KMSKS. ATP is bound at residue Lys-583.

The protein belongs to the class-I aminoacyl-tRNA synthetase family.

It is found in the cytoplasm. It catalyses the reaction tRNA(Leu) + L-leucine + ATP = L-leucyl-tRNA(Leu) + AMP + diphosphate. The sequence is that of Leucine--tRNA ligase from Alkaliphilus oremlandii (strain OhILAs) (Clostridium oremlandii (strain OhILAs)).